The sequence spans 697 residues: Heat shock protein homolog SSE1 (697 aa).

Residues 664-674 (EMAEKLAAQRA) show a composition bias toward low complexity. Residues 664-697 (EMAEKLAAQRAAEQKAQESKAESDKDAEGDIDLD) are disordered. Residues 675-691 (AEQKAQESKAESDKDAE) are compositionally biased toward basic and acidic residues.

This sequence belongs to the heat shock protein 70 family.

It is found in the cytoplasm. The chain is Heat shock protein homolog SSE1 (SSE1) from Eremothecium gossypii (strain ATCC 10895 / CBS 109.51 / FGSC 9923 / NRRL Y-1056) (Yeast).